Here is a 241-residue protein sequence, read N- to C-terminus: Uracil-DNA glycosylase (241 aa).

The active-site Proton acceptor is the aspartate 71.

It belongs to the uracil-DNA glycosylase (UDG) superfamily. UNG family.

The protein resides in the cytoplasm. It catalyses the reaction Hydrolyzes single-stranded DNA or mismatched double-stranded DNA and polynucleotides, releasing free uracil.. Functionally, excises uracil residues from the DNA which can arise as a result of misincorporation of dUMP residues by DNA polymerase or due to deamination of cytosine. In Xanthomonas axonopodis pv. citri (strain 306), this protein is Uracil-DNA glycosylase.